The primary structure comprises 578 residues: Arginine--tRNA ligase (578 aa).

The short motif at 127–137 (PNLAKEMHVGH) is the 'HIGH' region element.

This sequence belongs to the class-I aminoacyl-tRNA synthetase family. In terms of assembly, monomer.

The protein localises to the cytoplasm. The catalysed reaction is tRNA(Arg) + L-arginine + ATP = L-arginyl-tRNA(Arg) + AMP + diphosphate. The chain is Arginine--tRNA ligase from Pseudomonas fluorescens (strain Pf0-1).